A 170-amino-acid polypeptide reads, in one-letter code: Large ribosomal subunit protein uL11 (170 aa).

It belongs to the universal ribosomal protein uL11 family. As to quaternary structure, part of the ribosomal stalk of the 50S ribosomal subunit. Interacts with L10 and the large rRNA to form the base of the stalk. L10 forms an elongated spine to which L12 dimers bind in a sequential fashion forming a multimeric L10(L12)X complex.

Functionally, forms part of the ribosomal stalk which helps the ribosome interact with GTP-bound translation factors. This Saccharolobus islandicus (strain Y.N.15.51 / Yellowstone #2) (Sulfolobus islandicus) protein is Large ribosomal subunit protein uL11.